The primary structure comprises 1424 residues: Putative disease resistance protein At3g14460 (1424 aa).

In terms of domain architecture, NB-ARC spans 152–454; it reads WRQASRSRPD…AIDLLYQPRS (303 aa). 200–207 serves as a coordination point for ATP; sequence GMPGVGKT. LRR repeat units follow at residues 498 to 523, 552 to 571, 572 to 595, 597 to 618, 620 to 641, 642 to 665, and 806 to 830; these read VSGD…HFSF, PTSL…LLNA, LSGL…LKGL, LLRY…VCTL, NLQT…SIAE, LINL…IKKL, and LPSL…FFFG. 2 disordered regions span residues 911 to 977 and 1050 to 1070; these read FRRS…PKDR and IKSS…QYDD. Composition is skewed to polar residues over residues 912–927 and 934–972; these read RRSL…SIPS and SSPT…SLSS. LRR repeat units follow at residues 1090 to 1114, 1118 to 1139, 1238 to 1262, 1264 to 1286, and 1310 to 1336; these read PQNL…LTES, LHEL…HPPT, TPKL…LFGL, SLLS…GFPS, and LENL…LLPK.

It belongs to the disease resistance NB-LRR family.

Its function is as follows. Potential disease resistance protein. In Arabidopsis thaliana (Mouse-ear cress), this protein is Putative disease resistance protein At3g14460.